Consider the following 98-residue polypeptide: NADH-ubiquinone oxidoreductase chain 4L (98 aa).

Transmembrane regions (helical) follow at residues 2–22 (PPIF…TLIF), 29–49 (SLLC…LIIL), and 61–81 (ILLL…LVMV).

Belongs to the complex I subunit 4L family. Core subunit of respiratory chain NADH dehydrogenase (Complex I) which is composed of 45 different subunits.

The protein localises to the mitochondrion inner membrane. The catalysed reaction is a ubiquinone + NADH + 5 H(+)(in) = a ubiquinol + NAD(+) + 4 H(+)(out). Functionally, core subunit of the mitochondrial membrane respiratory chain NADH dehydrogenase (Complex I) which catalyzes electron transfer from NADH through the respiratory chain, using ubiquinone as an electron acceptor. Part of the enzyme membrane arm which is embedded in the lipid bilayer and involved in proton translocation. The sequence is that of NADH-ubiquinone oxidoreductase chain 4L (MT-ND4L) from Avahi occidentalis (Western woolly lemur).